The chain runs to 1224 residues: Integrin alpha pat-2 (1224 aa).

The signal sequence occupies residues methionine 1–serine 27. The Extracellular segment spans residues phenylalanine 28–tryptophan 1153. 7 FG-GAP repeats span residues asparagine 29–glutamate 96, asparagine 110–glutamate 173, glutamate 180–proline 235, asparagine 236–asparagine 292, leucine 293–tyrosine 347, glycine 364–glutamate 423, and glutamine 427–alanine 490. Asparagine 74, asparagine 110, asparagine 230, and asparagine 292 each carry an N-linked (GlcNAc...) asparagine glycan. Asparagine 610 carries an N-linked (GlcNAc...) asparagine glycan. Residues arginine 622–aspartate 624 carry the Cell attachment site motif. 3 N-linked (GlcNAc...) asparagine glycosylation sites follow: asparagine 681, asparagine 775, and asparagine 819. 2 disordered regions span residues leucine 898–glycine 968 and aspartate 981–phenylalanine 1037. Acidic residues predominate over residues arginine 920 to threonine 931. Over residues valine 955–arginine 964 the composition is skewed to basic and acidic residues. Acidic residues predominate over residues tyrosine 984 to phenylalanine 1003. The span at serine 1008–glutamate 1023 shows a compositional bias: basic residues. The segment covering glycine 1024–phenylalanine 1037 has biased composition (basic and acidic residues). Residues tryptophan 1154–leucine 1174 traverse the membrane as a helical segment. The Cytoplasmic portion of the chain corresponds to tryptophan 1175–leucine 1224. The tract at residues alanine 1190–leucine 1224 is disordered. The segment covering aspartate 1204–leucine 1224 has biased composition (polar residues).

The protein belongs to the integrin alpha chain family. In terms of assembly, heterodimer of an alpha and a beta subunit. Alpha pat-2 associates with beta pat-3.

Its subcellular location is the membrane. Its function is as follows. Required for muscle development probably through the regulation of the actin-myosin cytoskeleton. During the formation of neuromuscular junctions at the larval stage, negatively regulates membrane protrusion from body wall muscles, probably through lamins such as epi-1, lam-2 and unc-52. Required for distal tip cell migration and dorsal pathfinding. Required for egg-laying. May play a role in cell motility and cell-cell interactions. This Caenorhabditis briggsae protein is Integrin alpha pat-2.